Here is a 439-residue protein sequence, read N- to C-terminus: ATP-dependent RNA helicase RhlB (439 aa).

A Q motif motif is present at residues 9–37 (QKFADLPLHPEVKQALAENGFEFCTPIQA). Residues 40-219 (LPVLLQSKDI…YDHMNDPVKV (180 aa)) form the Helicase ATP-binding domain. 53 to 60 (AQTGTGKT) contacts ATP. Residues 165–168 (DEAD) carry the DEAD box motif. In terms of domain architecture, Helicase C-terminal spans 243–390 (KMRLLLTLIE…VSNYDRDALL (148 aa)). The disordered stretch occupies residues 395 to 439 (SPVKIHRKHPAGARNLRERSGAGRTPGAHRSGGRPPRHDRTRRQP). The segment covering 425 to 439 (SGGRPPRHDRTRRQP) has biased composition (basic residues).

It belongs to the DEAD box helicase family. RhlB subfamily. In terms of assembly, component of the RNA degradosome, which is a multiprotein complex involved in RNA processing and mRNA degradation.

It localises to the cytoplasm. The enzyme catalyses ATP + H2O = ADP + phosphate + H(+). Its function is as follows. DEAD-box RNA helicase involved in RNA degradation. Has RNA-dependent ATPase activity and unwinds double-stranded RNA. The chain is ATP-dependent RNA helicase RhlB from Shewanella oneidensis (strain ATCC 700550 / JCM 31522 / CIP 106686 / LMG 19005 / NCIMB 14063 / MR-1).